A 61-amino-acid polypeptide reads, in one-letter code: UPF0434 protein PSPTO_3844 (61 aa).

Belongs to the UPF0434 family.

The polypeptide is UPF0434 protein PSPTO_3844 (Pseudomonas syringae pv. tomato (strain ATCC BAA-871 / DC3000)).